The following is a 102-amino-acid chain: Aspartyl/glutamyl-tRNA(Asn/Gln) amidotransferase subunit C (102 aa).

It belongs to the GatC family. In terms of assembly, heterotrimer of A, B and C subunits.

The enzyme catalyses L-glutamyl-tRNA(Gln) + L-glutamine + ATP + H2O = L-glutaminyl-tRNA(Gln) + L-glutamate + ADP + phosphate + H(+). It carries out the reaction L-aspartyl-tRNA(Asn) + L-glutamine + ATP + H2O = L-asparaginyl-tRNA(Asn) + L-glutamate + ADP + phosphate + 2 H(+). Functionally, allows the formation of correctly charged Asn-tRNA(Asn) or Gln-tRNA(Gln) through the transamidation of misacylated Asp-tRNA(Asn) or Glu-tRNA(Gln) in organisms which lack either or both of asparaginyl-tRNA or glutaminyl-tRNA synthetases. The reaction takes place in the presence of glutamine and ATP through an activated phospho-Asp-tRNA(Asn) or phospho-Glu-tRNA(Gln). This is Aspartyl/glutamyl-tRNA(Asn/Gln) amidotransferase subunit C from Lactobacillus acidophilus (strain ATCC 700396 / NCK56 / N2 / NCFM).